We begin with the raw amino-acid sequence, 267 residues long: Small ribosomal subunit protein uS3 (267 aa).

A KH type-2 domain is found at 39–114; it reads IRKYLETNLK…RVNINIVEIR (76 aa). The segment covering 229 to 248 has biased composition (low complexity); the sequence is ANNRGRGNNRGRGNSRQNGG. Residues 229 to 267 are disordered; the sequence is ANNRGRGNNRGRGNSRQNGGRSRRPRQGQASTQGRGGNN.

This sequence belongs to the universal ribosomal protein uS3 family. In terms of assembly, part of the 30S ribosomal subunit. Forms a tight complex with proteins S10 and S14.

Its function is as follows. Binds the lower part of the 30S subunit head. Binds mRNA in the 70S ribosome, positioning it for translation. This is Small ribosomal subunit protein uS3 from Oenococcus oeni (strain ATCC BAA-331 / PSU-1).